A 250-amino-acid chain; its full sequence is N-acyl homoserine lactonase (250 aa).

Residues H104, H106, D108, H109, H169, D191, and H235 each contribute to the Zn(2+) site.

The protein belongs to the metallo-beta-lactamase superfamily. Monomer. It depends on Zn(2+) as a cofactor.

The enzyme catalyses an N-acyl-L-homoserine lactone + H2O = an N-acyl-L-homoserine + H(+). Catalyzes hydrolysis of N-hexanoyl-(S)-homoserine lactone, but not the R-enantiomer. Hydrolyzes short- and long-chain N-acyl homoserine lactones with or without 3-oxo substitution at C3, has maximum activity on C10-AHL. In Bacillus thuringiensis subsp. indiana, this protein is N-acyl homoserine lactonase.